Here is a 319-residue protein sequence, read N- to C-terminus: MSEEHSNDHIEDVVLCSQNCDETNSPKNEKDEKDFKNFSSESSDSYYKNKFRLKKNSIEIKKKSLLKSKLKNDDIQTIIKNDPILSKLNKTMTTDDEIFDLANKKENKTKFKLEKEKEKNEKKEKKEKKVTNDSTNNKNKNNSVPFLNENQENKNQHNHNNKIKYELNEQTYDINNISEEILKKENHHTNIEYNEKVQDQDNTLNINQKVNKIQLNSTKKQKQKEKTKKEIKLNEQNEIKKNNQNFNSSILNEIKKNKELSPLSLIKKHGRLINNIEEIYNSNCEQIQNVRDEFAELKNDLNKIMNLINIGQKAVASLK.

Basic and acidic residues predominate over residues 1–12 (MSEEHSNDHIED). Disordered stretches follow at residues 1 to 43 (MSEE…SESS) and 112 to 158 (KLEK…NQHN). A compositionally biased stretch (polar residues) spans 16–26 (CSQNCDETNSP). Composition is skewed to basic and acidic residues over residues 27–36 (KNEKDEKDFK) and 112–131 (KLEKEKEKNEKKEKKEKKVT). Coiled coils occupy residues 100 to 134 (DLANKKENKTKFKLEKEKEKNEKKEKKEKKVTNDS), 166 to 242 (ELNE…IKKN), and 281 to 310 (NSNCEQIQNVRDEFAELKNDLNKIMNLINI). A compositionally biased stretch (low complexity) spans 132-150 (NDSTNNKNKNNSVPFLNEN).

The sequence is that of Coiled-coil domain-containing protein PF3D7_1144200 from Plasmodium falciparum (isolate 3D7).